We begin with the raw amino-acid sequence, 2151 residues long: Protein PRR14L (2151 aa).

Composition is skewed to basic and acidic residues over residues 112 to 123 (KRSESMEPKVFR) and 134 to 154 (EPSEGAKEDPHQHSTAAEEKT). Disordered regions lie at residues 112-160 (KRSE…SQED), 206-225 (GTKTDNNEGHKNGNVSKDLS), and 314-350 (QLHGHHNEQPSSTHDSPTATSPLKENSEVSCFTSDLS). S157 carries the post-translational modification Phosphoserine. Polar residues predominate over residues 322 to 350 (QPSSTHDSPTATSPLKENSEVSCFTSDLS). 2 positions are modified to phosphoserine: S582 and S945. Positions 974 to 1017 (SNQNRPDECKSEGQSAKEMLSSDQRETVTEPHGEVNHNQKDLLV) are disordered. A compositionally biased stretch (basic and acidic residues) spans 996–1013 (DQRETVTEPHGEVNHNQK). Phosphoserine is present on S1029. Residues 1091–1103 (DSRSTLSRRELDA) show a composition bias toward basic and acidic residues. 4 disordered regions span residues 1091 to 1115 (DSRSTLSRRELDAAHTGTTGQDSDF), 1178 to 1226 (DSHY…SCHD), 1782 to 1802 (TGVHSQTHTQAPPQPPAPLQD), and 1986 to 2012 (AACPCPQSSPPEQKEAEPEKRPKKVSQ). Positions 1178–1187 (DSHYGQQDKG) are enriched in polar residues. The segment covering 1188–1201 (TSLRETQEMTEGSR) has biased composition (basic and acidic residues).

This is Protein PRR14L (PRR14L) from Homo sapiens (Human).